The following is a 329-amino-acid chain: GTPase Obg (329 aa).

An Obg domain is found at 1 to 159 (MQFIDQARIT…WFLQLELKLL (159 aa)). Residues 160 to 328 (AEVGIIGLPN…LLAQVWKELG (169 aa)) form the OBG-type G domain. Residues 166-173 (GLPNAGKS), 191-195 (FTTLV), 213-216 (DIPG), 280-283 (NKQE), and 309-311 (SAA) contribute to the ATP site. Mg(2+) is bound by residues Ser173 and Thr193.

It belongs to the TRAFAC class OBG-HflX-like GTPase superfamily. OBG GTPase family. In terms of assembly, monomer. Requires Mg(2+) as cofactor.

Its subcellular location is the cytoplasm. Its function is as follows. An essential GTPase which binds GTP, GDP and possibly (p)ppGpp with moderate affinity, with high nucleotide exchange rates and a fairly low GTP hydrolysis rate. Plays a role in control of the cell cycle, stress response, ribosome biogenesis and in those bacteria that undergo differentiation, in morphogenesis control. The sequence is that of GTPase Obg from Prochlorococcus marinus (strain MIT 9303).